A 95-amino-acid chain; its full sequence is uncharacterized protein (95 aa).

A helical membrane pass occupies residues 45–65; the sequence is WLSGLAFVLQAALVMPVVLAF.

Its subcellular location is the membrane. This is an uncharacterized protein from Mycobacterium leprae (strain TN).